We begin with the raw amino-acid sequence, 1509 residues long: Putative endo-alpha-N-acetylgalactosaminidase (1509 aa).

A signal peptide spans 1–41; the sequence is MPFRGRRRQSALRGLSLAATFCLAAGSSGISGALFATPAQA. D288, N290, D292, K294, and D299 together coordinate Ca(2+). The interval 313–585 is catalytic; that stretch reads GGDDVKNRVV…NLPVKFLQQQ (273 aa). D369 lines the substrate pocket. D472 acts as the Nucleophile in catalysis. E498 acts as the Proton donor/acceptor in catalysis. N878, E880, D926, and Y929 together coordinate Ca(2+). Disordered stretches follow at residues 1176–1197 and 1403–1439; these read NGWG…DGPP and IKAA…SGGG. A compositionally biased stretch (low complexity) spans 1407–1428; it reads NPNPGTGSNPGTGSNPGTDPGT. A compositionally biased stretch (gly residues) spans 1429–1439; the sequence is GSAGGNSSGGG. The LPXTG sorting signal motif lies at 1475–1479; that stretch reads LAETG. Residue T1478 is modified to Pentaglycyl murein peptidoglycan amidated threonine. The propeptide at 1479-1509 is removed by sortase; the sequence is GFSGLVLPLGIGLMLLLIGAAAIIVRRHRHS.

It belongs to the glycosyl hydrolase 101 family. A subfamily.

It is found in the secreted. The protein localises to the cell wall. The enzyme catalyses a 3-O-[beta-D-galactosyl-(1-&gt;3)-N-acetyl-alpha-D-galactosaminyl]-L-threonyl-[protein] + H2O = beta-D-galactosyl-(1-&gt;3)-N-acetyl-D-galactosamine + L-threonyl-[protein]. It carries out the reaction a 3-O-[beta-D-galactosyl-(1-&gt;3)-N-acetyl-alpha-D-galactosaminyl]-L-seryl-[protein] + H2O = beta-D-galactosyl-(1-&gt;3)-N-acetyl-D-galactosamine + L-seryl-[protein]. In terms of biological role, probably involved in the breakdown of mucin-type O-linked glycans. Specifically removes the T-antigen disaccharide (Gal-beta-1,3-GalNAc-alpha) from extracellular host glycoproteins. In Renibacterium salmoninarum (strain ATCC 33209 / DSM 20767 / JCM 11484 / NBRC 15589 / NCIMB 2235), this protein is Putative endo-alpha-N-acetylgalactosaminidase.